The following is a 219-amino-acid chain: Leukocyte surface antigen CD53 (219 aa).

Residues 1 to 11 (MGMSSLKLLKY) are Cytoplasmic-facing. Residues 12 to 32 (VLFFFNLLFWICGCCILGFGI) traverse the membrane as a helical segment. At 33–54 (YLLIHNNFGVLFHNLPSLTLGN) the chain is on the extracellular side. A helical membrane pass occupies residues 55–69 (VFVIVGSIIMVVAFL). The Cytoplasmic portion of the chain corresponds to 70–80 (GCMGSIKENKC). A helical membrane pass occupies residues 81–106 (LLMSFFILLLIILLAEVTLAILLFVY). At 107–181 (EQKLNEYVAK…AKARLWFHSN (75 aa)) the chain is on the extracellular side. 2 N-linked (GlcNAc...) asparagine glycosylation sites follow: N129 and N148. The helical transmembrane segment at 182-206 (FLYIGIITICVCVIEVLGMSFALTL) threads the bilayer. The Cytoplasmic segment spans residues 207–219 (NCQIDKTSQTIGL).

The protein belongs to the tetraspanin (TM4SF) family. In terms of assembly, interacts with SCIMP. Interacts with CD45/PTPRC. Interacts with IL7R. Interacts with RBL2 and PPP2CA. In terms of tissue distribution, B-cells, monocytes, macrophages, neutrophils, single (CD4 or CD8) positive thymocytes and peripheral T-cells.

It localises to the cell membrane. The protein localises to the cell junction. It is found in the membrane. Its subcellular location is the synapse. Structural component of specialized membrane microdomains known as tetraspanin-enriched microdomains (TERMs), which act as platforms for receptor clustering and signaling. Participates thereby in diverse biological functions such as cell signal transduction, adhesion, migration and protein trafficking. Plays a role in the activation of monocytes and B-cells. Acts as an essential regulator of B-cell development by promoting interleukin-7 receptor/IL7R signaling. Also promotes, in B-cells, the BCR signaling by recruiting PKC to the plasma membrane in order to phosphorylate its substrates. Plays an essential role in B- and T-cells homing to lymph nodes by stabilizing L-selectin/SELL cell surface expression. Also mediates metabolic and inflammatory functions in hepatocytes and adipose tissue by promoting TNF-alpha and LPS signaling independent of the immune compartment. In Homo sapiens (Human), this protein is Leukocyte surface antigen CD53 (CD53).